The chain runs to 229 residues: Platelet-activating factor acetylhydrolase IB subunit alpha2 (229 aa).

At S2 the chain carries N-acetylserine. A Phosphoserine modification is found at S2. S48 is an active-site residue. Position 64 is a phosphoserine (S64). Active-site residues include D193 and H196. The residue at position 220 (T220) is a Phosphothreonine.

The protein belongs to the 'GDSL' lipolytic enzyme family. Platelet-activating factor acetylhydrolase IB beta/gamma subunits subfamily. In terms of assembly, forms a catalytic dimer which is either homodimer (alpha2/alpha2 homodimer) or heterodimer with PAFAH1B3 (alpha2/alpha1 heterodimer). Component of the cytosolic (PAF-AH (I)) heterotetrameric enzyme, which is composed of PAFAH1B1 (beta), PAFAH1B2 (alpha2) and PAFAH1B3 (alpha1) subunits. The catalytic activity of the enzyme resides in the alpha1 (PAFAH1B3) and alpha2 (PAFAH1B2) subunits, whereas the beta subunit (PAFAH1B1) has regulatory activity. Trimer formation is not essential for the catalytic activity. Interacts (homodimer form) with PAFAH1B1 (homodimer form); PAFAH1B2 competes with NDEL1 for PAFAH1B1 binding. Interacts with VLDLR; this interaction may modulate the Reelin pathway.

It localises to the cytoplasm. The enzyme catalyses a 1-O-alkyl-2-acetyl-sn-glycero-3-phosphocholine + H2O = a 1-O-alkyl-sn-glycero-3-phosphocholine + acetate + H(+). It carries out the reaction 1-O-hexadecyl-2-acetyl-sn-glycero-3-phosphocholine + H2O = 1-O-hexadecyl-sn-glycero-3-phosphocholine + acetate + H(+). The catalysed reaction is 1-O-hexadecyl-2-acetyl-sn-glycero-3-phosphate + H2O = 1-O-hexadecyl-sn-glycero-3-phosphate + acetate + H(+). It catalyses the reaction 1-O-hexadecyl-2-acetyl-sn-glycero-3-phosphoethanolamine + H2O = 1-O-hexadecyl-sn-glycero-3-phosphoethanolamine + acetate + H(+). Its activity is regulated as follows. Beta subunit (PAFAH1B1) stimulates the acetylhydrolase activity of the alpha2/alpha2 catalytic homodimer. Alpha2 catalytic subunit of the cytosolic type I platelet-activating factor (PAF) acetylhydrolase (PAF-AH (I)) heterotetrameric enzyme that catalyzes the hydrolyze of the acetyl group at the sn-2 position of PAF and its analogs and modulates the action of PAF. The activity and substrate specificity of PAF-AH (I) are affected by its subunit composition. The alpha2/alpha2 homodimer (PAFAH1B2/PAFAH1B2 homodimer) hydrolyzes PAF and 1-O-alkyl-2-acetyl-sn-glycero-3-phosphorylethanolamine (AAGPE) more efficiently than 1-O-alkyl-2-acetyl-sn-glycero-3-phosphoric acid (AAGPA). In contrast, the alpha1/alpha2 heterodimer(PAFAH1B3/PAFAH1B3 heterodimer) hydrolyzes AAGPA more efficiently than PAF, but has little hydrolytic activity towards AAGPE. May play a role in male germ cell meiosis during the late pachytenestage and meiotic divisions as well as early spermiogenesis. In Pongo abelii (Sumatran orangutan), this protein is Platelet-activating factor acetylhydrolase IB subunit alpha2.